Consider the following 194-residue polypeptide: Adenylate kinase (194 aa).

12–17 contacts ATP; sequence GSGKTT. Positions 34-63 are NMP; the sequence is STGDLLREEVKKGTPLGATIASFIDNGQLV. AMP is bound by residues Thr-35, Arg-40, 61–63, 88–91, and Gln-95; these read QLV and GFPR. Residues 130 to 136 form an LID region; sequence GRARGAD. Arg-131 contributes to the ATP binding site. Positions 133 and 145 each coordinate AMP. An ATP-binding site is contributed by Arg-173.

It belongs to the adenylate kinase family. Monomer.

It is found in the cytoplasm. The enzyme catalyses AMP + ATP = 2 ADP. Its pathway is purine metabolism; AMP biosynthesis via salvage pathway; AMP from ADP: step 1/1. Its function is as follows. Catalyzes the reversible transfer of the terminal phosphate group between ATP and AMP. Plays an important role in cellular energy homeostasis and in adenine nucleotide metabolism. The polypeptide is Adenylate kinase (Nitratiruptor sp. (strain SB155-2)).